We begin with the raw amino-acid sequence, 507 residues long: ATP synthase subunit alpha, chloroplastic (507 aa).

Residue 170-177 (GDRQTGKT) participates in ATP binding.

The protein belongs to the ATPase alpha/beta chains family. As to quaternary structure, F-type ATPases have 2 components, CF(1) - the catalytic core - and CF(0) - the membrane proton channel. CF(1) has five subunits: alpha(3), beta(3), gamma(1), delta(1), epsilon(1). CF(0) has four main subunits: a, b, b' and c.

It is found in the plastid. The protein localises to the chloroplast thylakoid membrane. It catalyses the reaction ATP + H2O + 4 H(+)(in) = ADP + phosphate + 5 H(+)(out). In terms of biological role, produces ATP from ADP in the presence of a proton gradient across the membrane. The alpha chain is a regulatory subunit. This is ATP synthase subunit alpha, chloroplastic from Piper cenocladum (Ant piper).